Consider the following 84-residue polypeptide: Small ribosomal subunit protein uS17 (84 aa).

The protein belongs to the universal ribosomal protein uS17 family. In terms of assembly, part of the 30S ribosomal subunit.

In terms of biological role, one of the primary rRNA binding proteins, it binds specifically to the 5'-end of 16S ribosomal RNA. The protein is Small ribosomal subunit protein uS17 of Photobacterium profundum (strain SS9).